Reading from the N-terminus, the 371-residue chain is MEAVMSPMMTCVHKIMCRVDQYGNIDSYDAALNVMRKRNIQITPKESVQFKSFLRMLNMADLCFEVKEEEPCCICFRKDVIYKEVPCGHYICVECYKEPIRNVCPECNAPWPERANDPTVKQYTEEQYAHTLGGYYVTRADGTNYRSQEEYLADLDNIYREVEEADQRDNDPIESDIEEEMNESEAEEEEPVPEIAQFEALNTPPPPPTNRRPKIRRPMERARNTTRYDSEELTNMLMTEVATRVSLRGGVGDLNWITQIKNDIRKIQAASYRSRNDNMMIKYFAYLVAIIMPNECEAQRREILKLHAFRCHKRNARDCCGTCGMDMCNQRTYSIREIPNNNGSRLITVCGRCNQINNVNNTAFRLLYNYM.

The segment at 72–108 adopts an RING-type zinc-finger fold; the sequence is CCICFRKDVIYKEVPCGHYICVECYKEPIRNVCPECN. The segment covering 178-192 has biased composition (acidic residues); it reads EEEMNESEAEEEEPV. The disordered stretch occupies residues 178-218; sequence EEEMNESEAEEEEPVPEIAQFEALNTPPPPPTNRRPKIRRP.

This Magallana gigas (Pacific oyster) protein is Putative RING finger protein ORF117.